We begin with the raw amino-acid sequence, 108 residues long: Putative pterin-4-alpha-carbinolamine dehydratase (108 aa).

This sequence belongs to the pterin-4-alpha-carbinolamine dehydratase family.

It catalyses the reaction (4aS,6R)-4a-hydroxy-L-erythro-5,6,7,8-tetrahydrobiopterin = (6R)-L-erythro-6,7-dihydrobiopterin + H2O. The protein is Putative pterin-4-alpha-carbinolamine dehydratase of Bordetella avium (strain 197N).